The primary structure comprises 314 residues: uncharacterized protein (314 aa).

The disordered stretch occupies residues 1–70 (MAGNSQRRGA…QGRHKKTDDT (70 aa)). The span at 44–65 (RPHHPAGKRAAKAARQAQGRHK) shows a compositional bias: basic residues. Positions 265, 285, and 294 each coordinate S-adenosyl-L-methionine.

This sequence belongs to the class IV-like SAM-binding methyltransferase superfamily. RNA methyltransferase TrmH family.

This is an uncharacterized protein from Mycolicibacterium gilvum (strain PYR-GCK) (Mycobacterium gilvum (strain PYR-GCK)).